The chain runs to 152 residues: S-Adenosylmethionine lyase (152 aa).

In terms of assembly, homotetramer. Interacts with host METK; this interaction induces the polymerization of METK into filaments that are enzymatically inactive.

The catalysed reaction is S-adenosyl-L-methionine = L-homoserine lactone + S-methyl-5'-thioadenosine. Its function is as follows. Degrades the intracellular SAM pools of the host cell and inhibits the host S-adenosylmethionine synthase METK/MAT, thereby preventing methylation of the viral genome. Induces the polymerization of METK into filaments that are enzymatically inactive. Keeping the viral genome in an unmethylated state allows the phage to shift from a lytic infection under normal growth conditions to a transient lysogenic infection under glucose starvation, by blocking its own expression. Does not protect the virus immune against host restriction-modification systems. This Escherichia coli (Bacteriophage T3) protein is S-Adenosylmethionine lyase.